The primary structure comprises 335 residues: Nucleoid-associated protein YejK (335 aa).

This sequence belongs to the YejK family.

The protein resides in the cytoplasm. It is found in the nucleoid. The polypeptide is Nucleoid-associated protein YejK (Shigella boydii serotype 18 (strain CDC 3083-94 / BS512)).